Here is a 233-residue protein sequence, read N- to C-terminus: Small ribosomal subunit protein uS3 (233 aa).

The region spanning 39–107 is the KH type-2 domain; it reads VRQFLASELT…PSQINIAEVR (69 aa).

This sequence belongs to the universal ribosomal protein uS3 family. As to quaternary structure, part of the 30S ribosomal subunit. Forms a tight complex with proteins S10 and S14.

In terms of biological role, binds the lower part of the 30S subunit head. Binds mRNA in the 70S ribosome, positioning it for translation. In Baumannia cicadellinicola subsp. Homalodisca coagulata, this protein is Small ribosomal subunit protein uS3.